Consider the following 721-residue polypeptide: DNA ligase (721 aa).

NAD(+) contacts are provided by residues 39–43 (DAEYD), 89–90 (SL), and Glu123. The active-site N6-AMP-lysine intermediate is Lys125. NAD(+) is bound by residues Arg146, Glu186, Lys302, and Lys326. Zn(2+) is bound by residues Cys418, Cys421, Cys436, and Cys442. The interval 556 to 588 (QASSAAREGEPANADGAYDPATVTPDSDTAGAE) is disordered. The 81-residue stretch at 641–721 (TKDSAVAGKT…AWAEIVRQAG (81 aa)) folds into the BRCT domain.

It belongs to the NAD-dependent DNA ligase family. LigA subfamily. Mg(2+) serves as cofactor. Mn(2+) is required as a cofactor.

It catalyses the reaction NAD(+) + (deoxyribonucleotide)n-3'-hydroxyl + 5'-phospho-(deoxyribonucleotide)m = (deoxyribonucleotide)n+m + AMP + beta-nicotinamide D-nucleotide.. DNA ligase that catalyzes the formation of phosphodiester linkages between 5'-phosphoryl and 3'-hydroxyl groups in double-stranded DNA using NAD as a coenzyme and as the energy source for the reaction. It is essential for DNA replication and repair of damaged DNA. The chain is DNA ligase from Novosphingobium aromaticivorans (strain ATCC 700278 / DSM 12444 / CCUG 56034 / CIP 105152 / NBRC 16084 / F199).